Reading from the N-terminus, the 545-residue chain is CTP synthase (545 aa).

The tract at residues Met-1–Leu-266 is amidoligase domain. Ser-14 is a binding site for CTP. UTP is bound at residue Ser-14. ATP contacts are provided by residues Ser-15–Ile-20 and Asp-72. Mg(2+)-binding residues include Asp-72 and Glu-140. Residues Asp-147 to Glu-149, Lys-187 to Gln-192, and Lys-223 each bind CTP. Residues Lys-187–Gln-192 and Lys-223 each bind UTP. ATP is bound at residue Lys-239–Val-241. One can recognise a Glutamine amidotransferase type-1 domain in the interval Val-291–Asn-543. Gly-352 provides a ligand contact to L-glutamine. The active-site Nucleophile; for glutamine hydrolysis is Cys-379. Residues Leu-380–Gln-383, Glu-403, and Arg-471 each bind L-glutamine. Catalysis depends on residues His-516 and Glu-518.

The protein belongs to the CTP synthase family. In terms of assembly, homotetramer.

The catalysed reaction is UTP + L-glutamine + ATP + H2O = CTP + L-glutamate + ADP + phosphate + 2 H(+). It catalyses the reaction L-glutamine + H2O = L-glutamate + NH4(+). It carries out the reaction UTP + NH4(+) + ATP = CTP + ADP + phosphate + 2 H(+). It participates in pyrimidine metabolism; CTP biosynthesis via de novo pathway; CTP from UDP: step 2/2. Allosterically activated by GTP, when glutamine is the substrate; GTP has no effect on the reaction when ammonia is the substrate. The allosteric effector GTP functions by stabilizing the protein conformation that binds the tetrahedral intermediate(s) formed during glutamine hydrolysis. Inhibited by the product CTP, via allosteric rather than competitive inhibition. Functionally, catalyzes the ATP-dependent amination of UTP to CTP with either L-glutamine or ammonia as the source of nitrogen. Regulates intracellular CTP levels through interactions with the four ribonucleotide triphosphates. This chain is CTP synthase, found in Buchnera aphidicola subsp. Acyrthosiphon pisum (strain Tuc7).